A 460-amino-acid polypeptide reads, in one-letter code: Lipase member H-B (460 aa).

Residues 1 to 26 (MLLSFYFNGLLLVGCLLSWGRSDTEG) form the signal peptide. N-linked (GlcNAc...) asparagine glycosylation is found at N67 and N75. The active-site Nucleophile is S163. A glycan (N-linked (GlcNAc...) asparagine) is linked at N177. The active-site Charge relay system is the D187. C242 and C255 form a disulfide bridge. Catalysis depends on H257, which acts as the Charge relay system. 2 cysteine pairs are disulfide-bonded: C279-C290 and C293-C301. N-linked (GlcNAc...) asparagine glycosylation is present at N289. N366 carries an N-linked (GlcNAc...) asparagine glycan. The cysteines at positions 436 and 455 are disulfide-linked.

The protein belongs to the AB hydrolase superfamily. Lipase family.

It is found in the secreted. The protein resides in the cell membrane. It carries out the reaction 1-hexadecanoyl-2-(9Z-octadecenoyl)-sn-glycero-3-phosphate + H2O = 2-(9Z-octadecenoyl)-sn-glycero-3-phosphate + hexadecanoate + H(+). Its function is as follows. Hydrolyzes specifically phosphatidic acid (PA) to produce 2-acyl lysophosphatidic acid (LPA; a potent bioactive lipid mediator) and fatty acid. Does not hydrolyze other phospholipids, like phosphatidylserine (PS), phosphatidylcholine (PC) and phosphatidylethanolamine (PE) or triacylglycerol (TG). The chain is Lipase member H-B (liph-b) from Xenopus laevis (African clawed frog).